The primary structure comprises 144 residues: Ribonuclease P protein subunit RPR2 (144 aa).

Residues 1 to 22 form a disordered region; it reads MGKKAHGGKMKPEIDENGTLLV. 4 residues coordinate Zn(2+): Cys-90, Cys-93, Cys-115, and Cys-117.

It belongs to the eukaryotic/archaeal RNase P protein component 4 family. As to quaternary structure, component of nuclear RNase P. RNase P consists of an RNA moiety and at least 9 protein subunits including POP1, POP3, POP4, POP5, POP6, POP7, POP8, RPP1 and RPR2, many of which are shared with the RNase MPR complex. Requires Zn(2+) as cofactor.

The protein resides in the nucleus. The enzyme catalyses Endonucleolytic cleavage of RNA, removing 5'-extranucleotides from tRNA precursor.. Its function is as follows. Component of ribonuclease P, a protein complex that generates mature tRNA molecules by cleaving their 5'-ends. This is Ribonuclease P protein subunit RPR2 (RPR2) from Saccharomyces cerevisiae (strain ATCC 204508 / S288c) (Baker's yeast).